The primary structure comprises 259 residues: L-erythrulose-1-phosphate isomerase (259 aa).

His-102 functions as the Electrophile in the catalytic mechanism. Catalysis depends on Glu-174, which acts as the Proton acceptor.

The protein belongs to the triosephosphate isomerase family.

The catalysed reaction is L-erythrulose 1-phosphate = D-erythrulose 4-phosphate. The protein operates within carbohydrate metabolism. Functionally, involved in catabolism of D-apiose. Catalyzes the isomerization of L-erythrulose 1-phosphate to D-erythrulose 4-phosphate. This Pectobacterium atrosepticum (strain SCRI 1043 / ATCC BAA-672) (Erwinia carotovora subsp. atroseptica) protein is L-erythrulose-1-phosphate isomerase.